The chain runs to 1400 residues: DNA-directed RNA polymerase subunit beta' (1400 aa).

Zn(2+) contacts are provided by C71, C73, C86, and C89. Residues D462, D464, and D466 each contribute to the Mg(2+) site. The Zn(2+) site is built by C820, C893, C900, and C903.

The protein belongs to the RNA polymerase beta' chain family. The RNAP catalytic core consists of 2 alpha, 1 beta, 1 beta' and 1 omega subunit. When a sigma factor is associated with the core the holoenzyme is formed, which can initiate transcription. The cofactor is Mg(2+). Zn(2+) serves as cofactor.

The enzyme catalyses RNA(n) + a ribonucleoside 5'-triphosphate = RNA(n+1) + diphosphate. DNA-dependent RNA polymerase catalyzes the transcription of DNA into RNA using the four ribonucleoside triphosphates as substrates. This is DNA-directed RNA polymerase subunit beta' from Methylobacterium nodulans (strain LMG 21967 / CNCM I-2342 / ORS 2060).